The primary structure comprises 240 residues: Mitochondrial transcription rescue factor 1 (240 aa).

Residues 1 to 83 constitute a mitochondrion transit peptide; sequence MAVPGVRLLT…ECYFPFSIRL (83 aa). The interval 92–127 is disordered; that stretch reads STKKTLQKEADEEDSDEETSYPERSEQEEELESEPG. Residues 101-124 show a composition bias toward acidic residues; that stretch reads ADEEDSDEETSYPERSEQEEELES. Phosphoserine is present on residues S106 and S116. In terms of domain architecture, S4 RNA-binding spans 142 to 217; it reads FRYDVILKTG…LKKVYEEKTE (76 aa).

As to quaternary structure, monomer. Interacts with POLRMT. Interacts (via S4 domain) with MTRFR (via C-terminus). Associates with mitoribosomal S39 large subunit, peptidyl tRNA and nascent chain.

The protein resides in the mitochondrion matrix. Mitochondrial RNA-binding protein involved in mitochondrial transcription regulation. Functions as a protective factor to maintain proper mitochondrial RNA level during stress. Acts at the transcription level and its protective function depends on its RNA binding ability. Part of a mitoribosome-associated quality control pathway that prevents aberrant translation by responding to interruptions during elongation. As heterodimer with MTRF, ejects the unfinished nascent chain and peptidyl transfer RNA (tRNA), respectively, from stalled ribosomes. Recruitment of mitoribosome biogenesis factors to these quality control intermediates suggests additional roles for MTRES1 and MTRF during mitoribosome rescue. This is Mitochondrial transcription rescue factor 1 (Mtres1) from Mus musculus (Mouse).